Consider the following 1231-residue polypeptide: Pesticidal crystal protein Cry1Bd (1231 aa).

Belongs to the delta endotoxin family.

In terms of biological role, promotes colloidosmotic lysis by binding to the midgut epithelial cells of lepidopteran larvae. Toxic to Plutella xylostella. The polypeptide is Pesticidal crystal protein Cry1Bd (cry1Bd) (Bacillus thuringiensis subsp. wuhanensis).